Reading from the N-terminus, the 322-residue chain is Transaldolase (322 aa).

Lys-132 serves as the catalytic Schiff-base intermediate with substrate. Phosphoserine occurs at positions 268 and 269.

Belongs to the transaldolase family. Type 1 subfamily. Homodimer.

It catalyses the reaction D-sedoheptulose 7-phosphate + D-glyceraldehyde 3-phosphate = D-erythrose 4-phosphate + beta-D-fructose 6-phosphate. Its pathway is carbohydrate degradation; pentose phosphate pathway; D-glyceraldehyde 3-phosphate and beta-D-fructose 6-phosphate from D-ribose 5-phosphate and D-xylulose 5-phosphate (non-oxidative stage): step 2/3. In terms of biological role, transaldolase is important for the balance of metabolites in the pentose-phosphate pathway. The chain is Transaldolase (tal1) from Schizosaccharomyces pombe (strain 972 / ATCC 24843) (Fission yeast).